Here is a 165-residue protein sequence, read N- to C-terminus: Nucleotide-binding protein CFF8240_1664 (165 aa).

It belongs to the YajQ family.

In terms of biological role, nucleotide-binding protein. The protein is Nucleotide-binding protein CFF8240_1664 of Campylobacter fetus subsp. fetus (strain 82-40).